The primary structure comprises 1126 residues: Ubiquitin carboxyl-terminal hydrolase 16/45 (1126 aa).

Positions 1–15 (MVKKRQADSRDHDCS) are enriched in basic and acidic residues. The tract at residues 1 to 44 (MVKKRQADSRDHDCSTDSGNEDLHHRKGLGSPGQSDGATPTTAS) is disordered. The segment covering 32-44 (PGQSDGATPTTAS) has biased composition (polar residues). A UBP-type zinc finger spans residues 43–181 (ASCQHIKKAV…ELVKKLAQKP (139 aa)). Residues cysteine 45, histidine 47, cysteine 70, cysteine 73, cysteine 111, cysteine 114, cysteine 119, histidine 126, histidine 130, histidine 139, cysteine 152, and cysteine 155 each contribute to the Zn(2+) site. Composition is skewed to low complexity over residues 215-229 (GGSFDDSSSRGSLAA) and 254-264 (SSGLSTSDSLT). Positions 215 to 264 (GGSFDDSSSRGSLAAAGGGGGVGSSRNRQVAIPMPPPEPSSGLSTSDSLT) are disordered. Cysteine 315 serves as the catalytic Nucleophile. 3 disordered regions span residues 513–547 (KPQPPQRRKPSPELSLTSSSSSVTPSTGQPTINTK), 570–762 (ASLG…SGSS), and 795–833 (EQGASNGTEDADGEAKAIEQPEKTPSQAQAMAQAQARTK). The span at 524 to 539 (PELSLTSSSSSVTPST) shows a compositional bias: low complexity. A compositionally biased stretch (basic residues) spans 586-598 (QRKAKRAAKKRQK). Composition is skewed to low complexity over residues 599–614 (SSLNLNGNDSGNGNEL) and 646–657 (TEDSTTSSVTTS). Positions 674 to 701 (APSTNNVPSSTASLTAPSKTYMDSNGNA) are enriched in polar residues. Residues 705-718 (GEKRDDTPEHMDKD) are compositionally biased toward basic and acidic residues. Over residues 730–762 (ATSPAPTATNSSTSTSATGNNNSVAGSGLSGSS) the composition is skewed to low complexity. Basic and acidic residues predominate over residues 807-816 (GEAKAIEQPE). The span at 821–830 (QAQAMAQAQA) shows a compositional bias: low complexity. The Proton acceptor role is filled by histidine 984. The interval 1037-1089 (LKVLDDSDDFSNSSSNSSTSDESQTPATPLEEQQTQQAQQPQQPQQLEEAANV) is disordered. Over residues 1046-1086 (FSNSSSNSSTSDESQTPATPLEEQQTQQAQQPQQPQQLEEA) the composition is skewed to low complexity.

It belongs to the peptidase C19 family.

The catalysed reaction is Thiol-dependent hydrolysis of ester, thioester, amide, peptide and isopeptide bonds formed by the C-terminal Gly of ubiquitin (a 76-residue protein attached to proteins as an intracellular targeting signal).. In terms of biological role, involved in the regulation of DNA damage repair. The protein is Ubiquitin carboxyl-terminal hydrolase 16/45 of Drosophila melanogaster (Fruit fly).